The following is a 644-amino-acid chain: Chaperone protein HtpG (644 aa).

The tract at residues 1 to 352 (MNARVEQLEF…AQDMSLNVSR (352 aa)) is a; substrate-binding. Residues 353–566 (EILQQDRQIK…AFGITPALAR (214 aa)) form a b region. A c region spans residues 567–644 (LYRASGQDIP…ILADRLARTL (78 aa)).

It belongs to the heat shock protein 90 family. In terms of assembly, homodimer.

The protein resides in the cytoplasm. In terms of biological role, molecular chaperone. Has ATPase activity. The polypeptide is Chaperone protein HtpG (Mycobacterium avium (strain 104)).